The following is a 347-amino-acid chain: Guanine nucleotide-binding protein alpha-5 subunit (347 aa).

Gly-2 carries the N-myristoyl glycine lipid modification. Cys-3 is lipidated: S-palmitoyl cysteine. The G-alpha domain occupies 27-347; sequence NETKLLLLGP…KNIFNTIINY (321 aa). The tract at residues 30-43 is G1 motif; the sequence is KLLLLGPGESGKST. GTP-binding positions include 35 to 42, 170 to 176, 195 to 199, 264 to 267, and Ala-319; these read GPGESGKS, LRSRVRT, DVGGQ, and NKVD. Positions 42 and 176 each coordinate Mg(2+). The tract at residues 168 to 176 is G2 motif; it reads DVLRSRVRT. Positions 191-200 are G3 motif; sequence FRMLDVGGQR. The interval 260 to 267 is G4 motif; the sequence is IIFFNKVD. Residues 317–322 are G5 motif; the sequence is TCAIDT.

Belongs to the G-alpha family. G(q) subfamily. As to quaternary structure, g proteins are composed of 3 units; alpha, beta and gamma. The alpha chain contains the guanine nucleotide binding site.

Functionally, guanine nucleotide-binding proteins (G proteins) are involved as modulators or transducers in various transmembrane signaling systems. The polypeptide is Guanine nucleotide-binding protein alpha-5 subunit (gpaE) (Dictyostelium discoideum (Social amoeba)).